A 426-amino-acid polypeptide reads, in one-letter code: Tyrosine--tRNA ligase (426 aa).

Position 36 (Tyr36) interacts with L-tyrosine. The 'HIGH' region signature appears at 41–50 (PTAPSLHVGH). Positions 174 and 178 each coordinate L-tyrosine. The short motif at 234-238 (KLGKS) is the 'KMSKS' region element. Lys237 serves as a coordination point for ATP. The S4 RNA-binding domain occupies 359 to 416 (DGIVDLLVASGLSPSRGAARRTIDEGGVLVNNIRIQSEEWTPRTSDFLHGRWLVLRRG).

Belongs to the class-I aminoacyl-tRNA synthetase family. TyrS type 1 subfamily. In terms of assembly, homodimer.

The protein resides in the cytoplasm. The catalysed reaction is tRNA(Tyr) + L-tyrosine + ATP = L-tyrosyl-tRNA(Tyr) + AMP + diphosphate + H(+). Its function is as follows. Catalyzes the attachment of tyrosine to tRNA(Tyr) in a two-step reaction: tyrosine is first activated by ATP to form Tyr-AMP and then transferred to the acceptor end of tRNA(Tyr). The polypeptide is Tyrosine--tRNA ligase (Mycobacterium leprae (strain TN)).